Consider the following 817-residue polypeptide: DNA mismatch repair protein MutS (817 aa).

Residue 604-611 (GPNMSGKS) participates in ATP binding.

This sequence belongs to the DNA mismatch repair MutS family.

Functionally, this protein is involved in the repair of mismatches in DNA. It is possible that it carries out the mismatch recognition step. This protein has a weak ATPase activity. The polypeptide is DNA mismatch repair protein MutS (Petrotoga mobilis (strain DSM 10674 / SJ95)).